Here is a 448-residue protein sequence, read N- to C-terminus: SET domain-containing protein SmydA-8, isoform B (448 aa).

One can recognise an SET domain in the interval 42–273 (PSWRVADSPI…AGAEITMSYA (232 aa)).

It belongs to the class V-like SAM-binding methyltransferase superfamily.

This chain is SET domain-containing protein SmydA-8, isoform B, found in Drosophila melanogaster (Fruit fly).